Reading from the N-terminus, the 556-residue chain is 2-isopropylmalate synthase (556 aa).

Positions 33-307 (PIWCSSDLRD…DPELDFSDID (275 aa)) constitute a Pyruvate carboxyltransferase domain. Asp-42, His-246, His-248, and Asn-282 together coordinate Mg(2+). Residues 439 to 556 (ANTPYALISH…SLSQTQAKAA (118 aa)) are regulatory domain.

This sequence belongs to the alpha-IPM synthase/homocitrate synthase family. LeuA type 2 subfamily. Homodimer. Mg(2+) serves as cofactor.

Its subcellular location is the cytoplasm. The enzyme catalyses 3-methyl-2-oxobutanoate + acetyl-CoA + H2O = (2S)-2-isopropylmalate + CoA + H(+). Its pathway is amino-acid biosynthesis; L-leucine biosynthesis; L-leucine from 3-methyl-2-oxobutanoate: step 1/4. In terms of biological role, catalyzes the condensation of the acetyl group of acetyl-CoA with 3-methyl-2-oxobutanoate (2-ketoisovalerate) to form 3-carboxy-3-hydroxy-4-methylpentanoate (2-isopropylmalate). The polypeptide is 2-isopropylmalate synthase (Pseudomonas savastanoi pv. phaseolicola (strain 1448A / Race 6) (Pseudomonas syringae pv. phaseolicola (strain 1448A / Race 6))).